The sequence spans 199 residues: Recombination protein RecR (199 aa).

The segment at 57–72 (CSICGNFTDRDPCRLC) adopts a C4-type zinc-finger fold. Residues 80 to 175 (SCICVVEEAR…KVTRLAYGLP (96 aa)) form the Toprim domain.

This sequence belongs to the RecR family.

Its function is as follows. May play a role in DNA repair. It seems to be involved in an RecBC-independent recombinational process of DNA repair. It may act with RecF and RecO. This Moorella thermoacetica (strain ATCC 39073 / JCM 9320) protein is Recombination protein RecR.